A 211-amino-acid polypeptide reads, in one-letter code: Cyclin-dependent kinase inhibitor 3 (211 aa).

The interval 1–20 (MKPPISIQASEFDSSDEEPV) is disordered. The segment at 1 to 34 (MKPPISIQASEFDSSDEEPVDEEQTPIQISWLPL) is interaction with CDK2. The Tyrosine-protein phosphatase domain maps to 32-200 (LPLSRVNCSQ…FRDKLAAYLS (169 aa)). Cys-140 (phosphocysteine intermediate) is an active-site residue.

This sequence belongs to the protein-tyrosine phosphatase family. As to quaternary structure, interacts with cyclin-dependent kinases such as CDK1, CDK2 and CDK3. Does not interact with CDK4. Interacts (via C-terminus) with phosphorylated CDK2 (via C-terminal helix). Interacts with MS4A3 (via C-terminus); the interaction enhances CDKN3 enzymatic activity.

Its subcellular location is the cytoplasm. The protein localises to the perinuclear region. It catalyses the reaction O-phospho-L-tyrosyl-[protein] + H2O = L-tyrosyl-[protein] + phosphate. The enzyme catalyses O-phospho-L-seryl-[protein] + H2O = L-seryl-[protein] + phosphate. It carries out the reaction O-phospho-L-threonyl-[protein] + H2O = L-threonyl-[protein] + phosphate. Its function is as follows. May play a role in cell cycle regulation. Dual specificity phosphatase active toward substrates containing either phosphotyrosine or phosphoserine residues. Dephosphorylates CDK2 at 'Thr-160' in a cyclin-dependent manner. The chain is Cyclin-dependent kinase inhibitor 3 from Mus musculus (Mouse).